An 81-amino-acid polypeptide reads, in one-letter code: Defensin-like protein 153 (81 aa).

The first 26 residues, 1–26 (MKNVSQVSVAVLLIFSILVLGIGVQG), serve as a signal peptide directing secretion. Disulfide bonds link cysteine 30-cysteine 81, cysteine 41-cysteine 60, cysteine 46-cysteine 75, and cysteine 50-cysteine 77.

Belongs to the DEFL family.

Its subcellular location is the secreted. In Arabidopsis thaliana (Mouse-ear cress), this protein is Defensin-like protein 153 (LCR31).